Here is a 285-residue protein sequence, read N- to C-terminus: Transcription factor E2F6 (285 aa).

Lys9 is covalently cross-linked (Glycyl lysine isopeptide (Lys-Gly) (interchain with G-Cter in SUMO2)). The DNA-binding element occupies 50 to 129 (YVSMRKALKV…SKNHIRWIGS (80 aa)). The DEF box signature appears at 95-129 (KLGVRKRRVYDITNVLDGIDLVEKKSKNHIRWIGS). Residues 130–222 (DLSNFGAVPQ…PAPKEDSITV (93 aa)) are dimerization. The segment at 143 to 164 (LQEELSDLSAMEDALDELIKDC) is leucine-zipper. The tract at residues 173–285 (DDKENERLAY…QSEEVLEVSN (113 aa)) is transcription repression. Residues 240-285 (QGSHSSNKTSDNVGTSSSKSKPLEHPQPEKEENPPQQSEEVLEVSN) are disordered. Polar residues predominate over residues 241–259 (GSHSSNKTSDNVGTSSSKS). Residues 260 to 272 (KPLEHPQPEKEEN) are compositionally biased toward basic and acidic residues.

This sequence belongs to the E2F/DP family. As to quaternary structure, forms heterodimers with DP family members TFDP1 or TFDP2. Component of the DRTF1/E2F transcription factor complex. Part of the E2F6.com-1 complex in G0 phase composed of E2F6, MGA, MAX, TFDP1, CBX3, BAT8, EUHMTASE1, RING1, RNF2, MBLR, L3MBTL2 and YAF2. Component of some MLL1/MLL complex, at least composed of the core components KMT2A/MLL1, ASH2L, HCFC1/HCF1, WDR5 and RBBP5, as well as the facultative components BACC1, CHD8, E2F6, HSP70, INO80C, KANSL1, LAS1L, MAX, MCRS1, MGA, KAT8/MOF, PELP1, PHF20, PRP31, RING2, RUVB1/TIP49A, RUVB2/TIP49B, SENP3, TAF1, TAF4, TAF6, TAF7, TAF9 and TEX10.

It is found in the nucleus. In terms of biological role, inhibitor of E2F-dependent transcription. Binds DNA cooperatively with DP proteins through the E2 recognition site, 5'-TTTC[CG]CGC-3'. Has a preference for the 5'-TTTCCCGC-3' E2F recognition site. E2F6 lacks the transcriptional activation and pocket protein binding domains. Appears to regulate a subset of E2F-dependent genes whose products are required for entry into the cell cycle but not for normal cell cycle progression. Represses expression of some meiosis-specific genes, including SLC25A31/ANT4. May silence expression via the recruitment of a chromatin remodeling complex containing histone H3-K9 methyltransferase activity. Overexpression delays the exit of cells from the S-phase. This chain is Transcription factor E2F6, found in Bos taurus (Bovine).